We begin with the raw amino-acid sequence, 180 residues long: YY1-associated factor 2 (180 aa).

Disordered regions lie at residues 1–24 (MGDK…GYWD), 47–120 (GTST…EVTV), and 132–180 (EKTK…GESH). Residues 19–48 (DEGYWDCSVCTFRNSAEAFKCMMCDVRKGT) form a RanBP2-type zinc finger. The segment covering 62-73 (QQVTQQFVPPTQ) has biased composition (low complexity). The segment covering 74-93 (SKKEKKDKVEKEKSEKETTS) has biased composition (basic and acidic residues). The span at 95–105 (KNSHKKTRPRL) shows a compositional bias: basic residues. Low complexity-rich tracts occupy residues 136–156 (SPPA…SSSD) and 163–174 (SRSSSPRGEASS). Serine 167 is subject to Phosphoserine.

In terms of assembly, interacts with MYC, MYCN, RNF2/RING1B and YY1. Part of the E2F6.com-1 complex in G0 phase composed of E2F6, MGA, MAX, TFDP1, CBX3, BAT8, EUHMTASE1, RING1, RNF2, MBLR, L3MBTL2 and YAF2.

Its subcellular location is the nucleus. Its function is as follows. Binds to MYC and inhibits MYC-mediated transactivation. Also binds to MYCN and enhances MYCN-dependent transcriptional activation. Increases calpain 2-mediated proteolysis of YY1 in vitro. Component of the E2F6.com-1 complex, a repressive complex that methylates 'Lys-9' of histone H3, suggesting that it is involved in chromatin-remodeling. This Homo sapiens (Human) protein is YY1-associated factor 2 (YAF2).